A 149-amino-acid polypeptide reads, in one-letter code: D-aminoacyl-tRNA deacylase (149 aa).

The Gly-cisPro motif, important for rejection of L-amino acids signature appears at 137–138 (GP).

It belongs to the DTD family. In terms of assembly, homodimer.

The protein localises to the cytoplasm. The enzyme catalyses glycyl-tRNA(Ala) + H2O = tRNA(Ala) + glycine + H(+). The catalysed reaction is a D-aminoacyl-tRNA + H2O = a tRNA + a D-alpha-amino acid + H(+). Its function is as follows. An aminoacyl-tRNA editing enzyme that deacylates mischarged D-aminoacyl-tRNAs. Also deacylates mischarged glycyl-tRNA(Ala), protecting cells against glycine mischarging by AlaRS. Acts via tRNA-based rather than protein-based catalysis; rejects L-amino acids rather than detecting D-amino acids in the active site. By recycling D-aminoacyl-tRNA to D-amino acids and free tRNA molecules, this enzyme counteracts the toxicity associated with the formation of D-aminoacyl-tRNA entities in vivo and helps enforce protein L-homochirality. This Clostridium botulinum (strain ATCC 19397 / Type A) protein is D-aminoacyl-tRNA deacylase.